We begin with the raw amino-acid sequence, 380 residues long: Glycine betaine/carnitine/choline transport ATP-binding protein OpuCA (380 aa).

The 235-residue stretch at 2–236 (LKLEQVSKVY…PANEFVEEFI (235 aa)) folds into the ABC transporter domain. 35-42 (GPSGCGKT) serves as a coordination point for ATP. CBS domains lie at 255–314 (MNRT…VGDV) and 315–373 (YRSD…WGDE).

This sequence belongs to the ABC transporter superfamily. The complex is composed of two ATP-binding proteins (OpuCA), two transmembrane proteins (OpuCB and OpuCD) and a solute-binding protein (OpuCC).

Its activity is regulated as follows. Binds cyclic di-AMP (c-di-AMP), which may regulate the transporter activity. Its function is as follows. Involved in a high affinity multicomponent binding-protein-dependent transport system for glycine betaine, carnitine and choline; probably responsible for energy coupling to the transport system. This Bacillus subtilis (strain 168) protein is Glycine betaine/carnitine/choline transport ATP-binding protein OpuCA (opuCA).